Consider the following 244-residue polypeptide: Probable transcriptional regulatory protein Xfasm12_1059 (244 aa).

The protein belongs to the TACO1 family.

It localises to the cytoplasm. This is Probable transcriptional regulatory protein Xfasm12_1059 from Xylella fastidiosa (strain M12).